The following is a 234-amino-acid chain: Ribosomal RNA small subunit methyltransferase G (234 aa).

Residues Gly74, Phe79, 125 to 126 (AE), and Arg144 contribute to the S-adenosyl-L-methionine site.

The protein belongs to the methyltransferase superfamily. RNA methyltransferase RsmG family.

The protein localises to the cytoplasm. Its function is as follows. Specifically methylates the N7 position of a guanine in 16S rRNA. The chain is Ribosomal RNA small subunit methyltransferase G from Roseiflexus castenholzii (strain DSM 13941 / HLO8).